The chain runs to 442 residues: Proline--tRNA ligase (442 aa).

The protein belongs to the class-II aminoacyl-tRNA synthetase family. ProS type 2 subfamily. In terms of assembly, homodimer.

Its subcellular location is the cytoplasm. It catalyses the reaction tRNA(Pro) + L-proline + ATP = L-prolyl-tRNA(Pro) + AMP + diphosphate. Functionally, catalyzes the attachment of proline to tRNA(Pro) in a two-step reaction: proline is first activated by ATP to form Pro-AMP and then transferred to the acceptor end of tRNA(Pro). The protein is Proline--tRNA ligase of Brucella ovis (strain ATCC 25840 / 63/290 / NCTC 10512).